We begin with the raw amino-acid sequence, 642 residues long: MMVESKTPLLDTVNTPEDLRKLDPSQLRQFADELRTETINAVSVTGGHLGAGLGVVELTVALHYVFNTPADRLIWDVGHQCYPHKILTGRRDRIRTLRMGGGLSGFTKRAESEYDPFGAGHSSTSISAALGMAVGRDQLGHKNHVICVIGDGSISAGMAYEAMNNAGAMNSRMIVILNDNDMSIAPPVGAMSGYLSRLISSRQYRGLRELGKQVAERLPRPLQEAARRAEEYARGFVTGGTLFEEMGFYYVGPIDGHNLDHLLPVLENIRDDQGTGPVLIHAVTQKGRGYGPAERSADKLHAVSKFDVITGAQAKAKANAPSYTRVFADSLIQEAEADSRVVAITAAMPSGTGLDLFEKRFPDRTYDVGIAEQHAVTFAAGLAAEGLKPFCAIYSTFLQRAYDQVVHDVCIQNLPVRFAIDRAGLVGSDGCTHAGSFDVAYLGCVPNIVIMAAADEAELKHMVATAAAYDHGPIAVRYPRGEGVGLEMPERGQVLEIGKGRIVKEGTKVAILSLGTRLKEALLAAEDLNARGLSTTVADARFAKPIDEALIRRLAQDHEVLITVEEGSIGGFGSYVLHFLAQSGLLDQGLKVRPMVLPDIFQDQDAPAKQYDEAGLNARHIVETALKALGTGLAAETPAARA.

Thiamine diphosphate is bound by residues histidine 79 and 120–122 (GHS). Aspartate 151 lines the Mg(2+) pocket. Residues 152–153 (GS), asparagine 180, tyrosine 290, and glutamate 372 each bind thiamine diphosphate. Asparagine 180 is a binding site for Mg(2+).

It belongs to the transketolase family. DXPS subfamily. In terms of assembly, homodimer. Mg(2+) is required as a cofactor. Thiamine diphosphate serves as cofactor.

It carries out the reaction D-glyceraldehyde 3-phosphate + pyruvate + H(+) = 1-deoxy-D-xylulose 5-phosphate + CO2. The protein operates within metabolic intermediate biosynthesis; 1-deoxy-D-xylulose 5-phosphate biosynthesis; 1-deoxy-D-xylulose 5-phosphate from D-glyceraldehyde 3-phosphate and pyruvate: step 1/1. In terms of biological role, catalyzes the acyloin condensation reaction between C atoms 2 and 3 of pyruvate and glyceraldehyde 3-phosphate to yield 1-deoxy-D-xylulose-5-phosphate (DXP). The chain is 1-deoxy-D-xylulose-5-phosphate synthase from Rhodospirillum centenum (strain ATCC 51521 / SW).